The following is a 193-amino-acid chain: Acyl carrier protein phosphodiesterase (193 aa).

It belongs to the AcpH family.

The enzyme catalyses holo-[ACP] + H2O = apo-[ACP] + (R)-4'-phosphopantetheine + H(+). In terms of biological role, converts holo-ACP to apo-ACP by hydrolytic cleavage of the phosphopantetheine prosthetic group from ACP. The chain is Acyl carrier protein phosphodiesterase from Escherichia coli O6:H1 (strain CFT073 / ATCC 700928 / UPEC).